The sequence spans 607 residues: Autophagy-related protein 16-1 (607 aa).

The interval 13-43 (WKRHISEQLRRRDRLQRQAFEEIILQYNKLL) is interaction with ATG5. The stretch at 79–230 (DSQLQEMAQL…QKELAEAAKE (152 aa)) forms a coiled coil. Ser-139 is modified (phosphoserine). The interval 207-230 (AENEKDSRRRQARLQKELAEAAKE) is WIPI2-binding. Positions 230–242 (EPLPVEQDDDIEV) are RB1CC1-binding. A phosphoserine mark is found at Ser-269 and Ser-287. The Caspase cleavage motif lies at 296–299 (DNVD). WD repeat units lie at residues 320-359 (AHDG…CEFK), 364-403 (GSNA…LRHT), 406-445 (GHSG…CIKT), 447-484 (FAGS…IVRE), 486-525 (ELLG…IKQT), 532-573 (KCGS…KVLS), and 575-607 (QHSS…WAQY).

Belongs to the WD repeat ATG16 family. Homodimer. Homooligomer. Heterooligomer with ATG16L2. Interacts with WIPI1. Interacts with WIPI2. Interacts with RB1CC1; the interaction is required for ULK1 complex-dependent autophagy. Interacts with ATG5. Part of the minor complex composed of 4 sets of ATG12-ATG5 and ATG16L1 (400 kDa); this complex interacts with ATG3 leading to disruption of ATG7 interaction and promotion of ATG8-like proteins lipidation. Part of the major complex composed of 8 sets of ATG12-ATG5 and ATG16L1 (800 kDa). Interacts with RAB33B (GTP- and GDP-bound forms); the complex consists of a tetramer where two RAB33B molecules bind independently one molecule of the ATG16L1 homodimer; the interaction promotes ATG12-ATG5-ATG16L1 complex recruitment to phagophores. Interacts (via WD repeats) with TMEM59; the interaction mediates unconventional autophagic activity of TMEM59. Interacts with TLR2. Interacts (via WD repeats) with MEFV. Interacts with PPP1CA; the interaction dephosphorylates ATG16L1 causing dissociation of ATG12-ATG5-ATG16L1 complex. Interacts (via N-terminal) with CLTC. Interacts with NOD1. Interacts with NOD2. Interacts with TUFM. Interacts with TRIM16. Interacts (via WD repeats) with SPATA33. Interacts with IRGM. Post-translationally, proteolytic cleavage by activated CASP3 leads to degradation and may regulate autophagy upon cellular stress and apoptotic stimuli. Phosphorylation at Ser-139 promotes association with the ATG12-ATG5 conjugate to form the ATG12-ATG5-ATG16L1 complex.

It is found in the cytoplasm. The protein resides in the preautophagosomal structure membrane. The protein localises to the endosome membrane. Its subcellular location is the lysosome membrane. Plays an essential role in both canonical and non-canonical autophagy: interacts with ATG12-ATG5 to mediate the lipidation to ATG8 family proteins (MAP1LC3A, MAP1LC3B, MAP1LC3C, GABARAPL1, GABARAPL2 and GABARAP). Acts as a molecular hub, coordinating autophagy pathways via distinct domains that support either canonical or non-canonical signaling. During canonical autophagy, interacts with ATG12-ATG5 to mediate the conjugation of phosphatidylethanolamine (PE) to ATG8 proteins, to produce a membrane-bound activated form of ATG8. Thereby, controls the elongation of the nascent autophagosomal membrane. As part of the ATG8 conjugation system with ATG5 and ATG12, required for recruitment of LRRK2 to stressed lysosomes and induction of LRRK2 kinase activity in response to lysosomal stress. Also involved in non-canonical autophagy, a parallel pathway involving conjugation of ATG8 proteins to single membranes at endolysosomal compartments, probably by catalyzing conjugation of phosphatidylserine (PS) to ATG8. Non-canonical autophagy plays a key role in epithelial cells to limit lethal infection by influenza A (IAV) virus. Regulates mitochondrial antiviral signaling (MAVS)-dependent type I interferon (IFN-I) production. Negatively regulates NOD1- and NOD2-driven inflammatory cytokine response. Instead, promotes an autophagy-dependent antibacterial pathway together with NOD1 or NOD2. Plays a role in regulating morphology and function of Paneth cell. In Pongo abelii (Sumatran orangutan), this protein is Autophagy-related protein 16-1.